The following is a 145-amino-acid chain: Transcription antitermination protein NusB (145 aa).

Belongs to the NusB family.

In terms of biological role, involved in transcription antitermination. Required for transcription of ribosomal RNA (rRNA) genes. Binds specifically to the boxA antiterminator sequence of the ribosomal RNA (rrn) operons. This chain is Transcription antitermination protein NusB, found in Acidothermus cellulolyticus (strain ATCC 43068 / DSM 8971 / 11B).